Consider the following 89-residue polypeptide: MPILGLGTWQAPPGKVEKAIKLDYLDLYLIHFPMGFKVIPSNTDIRDTWEGMEDLVDAGLVKYTSLIEDPXVKKIADKYNKEYPFHVDY.

H31 is a substrate binding site.

Belongs to the aldo/keto reductase family. Monomer.

The sequence is that of Rho beta-crystallin from Lepidodactylus lugubris (Mourning gecko).